The following is a 68-amino-acid chain: Large ribosomal subunit protein uL30 (68 aa).

The protein belongs to the universal ribosomal protein uL30 family. Part of the 50S ribosomal subunit.

The chain is Large ribosomal subunit protein uL30 from Paenarthrobacter aurescens (strain TC1).